The primary structure comprises 677 residues: Zinc finger and BTB domain-containing protein 5 (677 aa).

Residues 24 to 93 (CDCVIVVGNR…MYTSTLMLGE (70 aa)) enclose the BTB domain. Positions 158–181 (LNSSQNGEEQPAPMSSSMRSNLDQ) are enriched in polar residues. 2 disordered regions span residues 158–252 (LNSS…MTDN) and 287–312 (SMAS…SFQC). The residue at position 234 (Ser-234) is a Phosphoserine. A Glycyl lysine isopeptide (Lys-Gly) (interchain with G-Cter in SUMO2) cross-link involves residue Lys-239. Polar residues predominate over residues 287–300 (SMASRATQVETSFD). Residues Lys-322 and Lys-330 each participate in a glycyl lysine isopeptide (Lys-Gly) (interchain with G-Cter in SUMO2) cross-link. Positions 331–387 (SEPLSSPEPQDEVSDVTSQAEGSESVEVEGVVVSAEKIDLSPESSDRSFSDPQSSTD) are disordered. The span at 350–365 (AEGSESVEVEGVVVSA) shows a compositional bias: low complexity. Residues 366 to 379 (EKIDLSPESSDRSF) are compositionally biased toward basic and acidic residues. Ser-371 bears the Phosphoserine mark. Residues Lys-404 and Lys-415 each participate in a glycyl lysine isopeptide (Lys-Gly) (interchain with G-Cter in SUMO2) cross-link. The interval 447-474 (LLSPEAGPAGGPSSAPGSHVENPFSEPA) is disordered. Residues 449–464 (SPEAGPAGGPSSAPGS) are compositionally biased toward low complexity. A Glycyl lysine isopeptide (Lys-Gly) (interchain with G-Cter in SUMO2) cross-link involves residue Lys-541. Positions 552-576 (QIPENSTSSQLMMNGATSSFENGHP) are enriched in polar residues. Residues 552–585 (QIPENSTSSQLMMNGATSSFENGHPSQPGPPQLT) are disordered. Glycyl lysine isopeptide (Lys-Gly) (interchain with G-Cter in SUMO2) cross-links involve residues Lys-594 and Lys-597. The segment at 613–635 (YACKICCKTFLTLTDCKKHIRVH) adopts a C2H2-type 1 zinc-finger fold. A C2H2-type 2; atypical zinc finger spans residues 641–664 (YACLKCGKRFSQSSHLYKHSKTTC). Residues Lys-645 and Lys-658 each participate in a glycyl lysine isopeptide (Lys-Gly) (interchain with G-Cter in SUMO2) cross-link.

Its subcellular location is the nucleus. Functionally, may be involved in transcriptional regulation. This is Zinc finger and BTB domain-containing protein 5 (ZBTB5) from Homo sapiens (Human).